We begin with the raw amino-acid sequence, 1276 residues long: Probable histone acetyltransferase HAC-like 3 (1276 aa).

Residues Val391 to Lys421 are disordered. Positions Gln396 to Ser413 are enriched in polar residues. A PHD-type zinc finger spans residues Ser621 to Lys689. Residues Ile704–Cys1130 enclose the CBP/p300-type HAT domain. Acetyl-CoA contacts are provided by residues Ile827–Ser829, Arg846–Thr847, and Trp902. Residues Glu953–Leu973 adopt a coiled-coil conformation. ZZ-type zinc fingers lie at residues Cys1013–Leu1076 and Leu1125–Tyr1187. Zn(2+)-binding residues include Cys1018, Cys1021, Cys1033, Cys1036, Cys1042, Cys1045, His1058, His1066, Cys1130, Cys1133, Cys1145, Cys1148, Cys1154, Cys1157, His1168, and His1177. A TAZ-type zinc finger spans residues His1177–Ile1260.

The protein resides in the nucleus. The enzyme catalyses L-lysyl-[protein] + acetyl-CoA = N(6)-acetyl-L-lysyl-[protein] + CoA + H(+). Acetyltransferase enzyme. Acetylates histones, giving a specific tag for transcriptional activation. The chain is Probable histone acetyltransferase HAC-like 3 from Oryza sativa subsp. japonica (Rice).